The sequence spans 570 residues: Sulfite reductase [NADPH] hemoprotein beta-component (570 aa).

The [4Fe-4S] cluster site is built by cysteine 434, cysteine 440, cysteine 479, and cysteine 483. Siroheme is bound at residue cysteine 483.

This sequence belongs to the nitrite and sulfite reductase 4Fe-4S domain family. Alpha(8)-beta(8). The alpha component is a flavoprotein, the beta component is a hemoprotein. Siroheme serves as cofactor. It depends on [4Fe-4S] cluster as a cofactor.

The enzyme catalyses hydrogen sulfide + 3 NADP(+) + 3 H2O = sulfite + 3 NADPH + 4 H(+). Its pathway is sulfur metabolism; hydrogen sulfide biosynthesis; hydrogen sulfide from sulfite (NADPH route): step 1/1. Component of the sulfite reductase complex that catalyzes the 6-electron reduction of sulfite to sulfide. This is one of several activities required for the biosynthesis of L-cysteine from sulfate. The polypeptide is Sulfite reductase [NADPH] hemoprotein beta-component (Enterobacter sp. (strain 638)).